The chain runs to 121 residues: Chorion class CA protein ERA.4 (121 aa).

The signal sequence occupies residues 1–23; sequence MSSSFFCFFLFCFQTCLIQNVYS. Residues 24–57 are left arm; the sequence is QCLGRVGPGGPPLGPYGGPLGGPGYGPVGYGGCG. Positions 58-105 are central domain; that stretch reads GYGGSGIGNVAVAGELPVAGSAAVLGQVPVIGAVEFAGPACAVGSVSI. Residues 106-121 are right arm; the sequence is SGACGPTCGCGGSPYY.

This sequence belongs to the chorion protein family.

This protein is one of many from the eggshell of the silk moth. The chain is Chorion class CA protein ERA.4 (ERA.4) from Bombyx mori (Silk moth).